We begin with the raw amino-acid sequence, 302 residues long: tRNA pseudouridine synthase B (302 aa).

The active-site Nucleophile is the D45.

Belongs to the pseudouridine synthase TruB family. Type 1 subfamily.

The enzyme catalyses uridine(55) in tRNA = pseudouridine(55) in tRNA. Functionally, responsible for synthesis of pseudouridine from uracil-55 in the psi GC loop of transfer RNAs. This chain is tRNA pseudouridine synthase B, found in Francisella tularensis subsp. holarctica (strain FTNF002-00 / FTA).